The sequence spans 464 residues: NADH dehydrogenase [ubiquinone] flavoprotein 1, mitochondrial (464 aa).

The N-terminal 20 residues, 1-20 (MLAARRLLGWSLPARVSVRF), are a transit peptide targeting the mitochondrion. Lys-81 carries the post-translational modification N6-acetyllysine; alternate. Lys-81 carries the N6-succinyllysine; alternate modification. An NADH-binding site is contributed by 87-96 (GRGGAGFPTG). N6-acetyllysine is present on Lys-104. FMN is bound at residue 199 to 247 (RGAGAYICGEETALIESIEGKQGKPRLKPPFPADVGVFGCPTTVANVET). Arg-257 carries the omega-N-methylarginine modification. Lys-375 bears the N6-acetyllysine mark. [4Fe-4S] cluster is bound by residues Cys-379, Cys-382, Cys-385, and Cys-425.

It belongs to the complex I 51 kDa subunit family. In terms of assembly, core subunit of respiratory chain NADH dehydrogenase (Complex I) which is composed of 45 different subunits. This is a component of the flavoprotein-sulfur (FP) fragment of the enzyme. Interacts with RAB5IF. Requires FMN as cofactor. [4Fe-4S] cluster serves as cofactor.

The protein resides in the mitochondrion inner membrane. It carries out the reaction a ubiquinone + NADH + 5 H(+)(in) = a ubiquinol + NAD(+) + 4 H(+)(out). Core subunit of the mitochondrial membrane respiratory chain NADH dehydrogenase (Complex I) which catalyzes electron transfer from NADH through the respiratory chain, using ubiquinone as an electron acceptor. Part of the peripheral arm of the enzyme, where the electrons from NADH are accepted by flavin mononucleotide (FMN) and then passed along a chain of iron-sulfur clusters by electron tunnelling to the final acceptor ubiquinone. Contains FMN, which is the initial electron acceptor as well as one iron-sulfur cluster. This Pongo pygmaeus (Bornean orangutan) protein is NADH dehydrogenase [ubiquinone] flavoprotein 1, mitochondrial.